A 208-amino-acid chain; its full sequence is Large ribosomal subunit protein uL3 (208 aa).

Glutamine 149 bears the N5-methylglutamine mark.

The protein belongs to the universal ribosomal protein uL3 family. As to quaternary structure, part of the 50S ribosomal subunit. Forms a cluster with proteins L14 and L19. Methylated by PrmB.

In terms of biological role, one of the primary rRNA binding proteins, it binds directly near the 3'-end of the 23S rRNA, where it nucleates assembly of the 50S subunit. The chain is Large ribosomal subunit protein uL3 from Haemophilus ducreyi (strain 35000HP / ATCC 700724).